The sequence spans 335 residues: Beta-hexosaminidase (335 aa).

Residues Asp-60, Arg-68, Arg-133, and 163 to 164 (KH) contribute to the substrate site. Residue His-176 is the Proton donor/acceptor of the active site. Residue Asp-247 is the Nucleophile of the active site.

Belongs to the glycosyl hydrolase 3 family. NagZ subfamily.

The protein resides in the cytoplasm. It catalyses the reaction Hydrolysis of terminal non-reducing N-acetyl-D-hexosamine residues in N-acetyl-beta-D-hexosaminides.. The protein operates within cell wall biogenesis; peptidoglycan recycling. In terms of biological role, plays a role in peptidoglycan recycling by cleaving the terminal beta-1,4-linked N-acetylglucosamine (GlcNAc) from peptide-linked peptidoglycan fragments, giving rise to free GlcNAc, anhydro-N-acetylmuramic acid and anhydro-N-acetylmuramic acid-linked peptides. The sequence is that of Beta-hexosaminidase from Xylella fastidiosa (strain M12).